The following is a 285-amino-acid chain: Lectin (285 aa).

An N-terminal signal peptide occupies residues 1-32; it reads MATSKLKTQNVVVSLSLTLTLVLVLLTSKANS. An N-linked (GlcNAc...) asparagine glycan is attached at Asn107.

It belongs to the leguminous lectin family. In terms of assembly, homotetramer.

Functionally, binds GalNAc and galactose. The polypeptide is Lectin (LE1) (Glycine max (Soybean)).